A 314-amino-acid chain; its full sequence is Homoserine O-acetyltransferase (314 aa).

The active-site Acyl-thioester intermediate is the Cys142. Substrate contacts are provided by Lys163 and Ser192. The Proton acceptor role is filled by His235. Residue Glu237 is part of the active site. Arg249 contacts substrate.

This sequence belongs to the MetA family.

The protein localises to the cytoplasm. The catalysed reaction is L-homoserine + acetyl-CoA = O-acetyl-L-homoserine + CoA. The protein operates within amino-acid biosynthesis; L-methionine biosynthesis via de novo pathway; O-acetyl-L-homoserine from L-homoserine: step 1/1. Transfers an acetyl group from acetyl-CoA to L-homoserine, forming acetyl-L-homoserine. The chain is Homoserine O-acetyltransferase from Streptococcus mutans serotype c (strain ATCC 700610 / UA159).